The primary structure comprises 496 residues: Glycerol kinase (496 aa).

T14 lines the ADP pocket. Residues T14 and T15 each contribute to the ATP site. Residue T14 coordinates sn-glycerol 3-phosphate. Sn-glycerol 3-phosphate contacts are provided by R84, E85, Y136, and D246. Glycerol is bound by residues R84, E85, Y136, D246, and Q247. The ADP site is built by T268 and G313. T268, G313, Q317, and G414 together coordinate ATP. Positions 414 and 418 each coordinate ADP.

The protein belongs to the FGGY kinase family.

It catalyses the reaction glycerol + ATP = sn-glycerol 3-phosphate + ADP + H(+). Its pathway is polyol metabolism; glycerol degradation via glycerol kinase pathway; sn-glycerol 3-phosphate from glycerol: step 1/1. Inhibited by fructose 1,6-bisphosphate (FBP). Key enzyme in the regulation of glycerol uptake and metabolism. Catalyzes the phosphorylation of glycerol to yield sn-glycerol 3-phosphate. This chain is Glycerol kinase, found in Myxococcus xanthus (strain DK1622).